The primary structure comprises 544 residues: Coiled-coil domain-containing protein 82 (544 aa).

A compositionally biased stretch (basic residues) spans 1 to 14 (MIHVRRHETRRNSK). Residues 1-294 (MIHVRRHETR…ESDEDGDDYI (294 aa)) are disordered. Residues 16-27 (HVPEQKSRVDWR) show a composition bias toward basic and acidic residues. Over residues 39 to 67 (DSDEELDSEEFDSDEELDSDESFENDEEL) the composition is skewed to acidic residues. Residues Ser88, Ser131, Ser154, Ser195, and Ser219 each carry the phosphoserine modification. Residues 88-108 (SKIQSEGNDSKCLINSGNGST) show a composition bias toward polar residues. A compositionally biased stretch (basic and acidic residues) spans 112–132 (ETNKIKHRNIDLQDQEKHLSQ). Residues 223–248 (MEQKTPEKTLAAQKREKLQKLKELSK) are compositionally biased toward basic and acidic residues. Thr227 carries the phosphothreonine modification. Positions 229–256 (EKTLAAQKREKLQKLKELSKQRSRQRRS) form a coiled coil. Residues 273-294 (DEVDEEEEEDNYESDEDGDDYI) show a composition bias toward acidic residues. Ser329 carries the phosphoserine modification.

The protein is Coiled-coil domain-containing protein 82 (CCDC82) of Homo sapiens (Human).